The following is a 269-amino-acid chain: GTP cyclohydrolase FolE2 (269 aa).

The protein belongs to the GTP cyclohydrolase IV family.

The enzyme catalyses GTP + H2O = 7,8-dihydroneopterin 3'-triphosphate + formate + H(+). The protein operates within cofactor biosynthesis; 7,8-dihydroneopterin triphosphate biosynthesis; 7,8-dihydroneopterin triphosphate from GTP: step 1/1. Its function is as follows. Converts GTP to 7,8-dihydroneopterin triphosphate. The chain is GTP cyclohydrolase FolE2 from Thiobacillus denitrificans (strain ATCC 25259 / T1).